Consider the following 381-residue polypeptide: MTLKNDYKTIFFSLFGIFIFSCINAINFYNFKIFLLIKNLGGEQINNINQTKFIGSIIAGFSLIQLINKLSNKRIILISLSLLIICTINLIILNNYTLIKINFILINFGIFSYFTSRTLDIIEISKEKKYLFLACIILLWAGGNLMVDLLNPFIKPTNNTIVICALLYCINILTEFLHYNHTSHKLNLNSKFSSLIKNIELQLLTGFVVSYITLNILWYYEAFALKKQLALINLKLILKYIFLTICFAIIPICYILSKINKYFANLSLNIILLICFILLPIHGTNKNLNILYIILIGNCLGAIFICNILILIDKFQDYELRTALLSYFSMCSIGIYAGALSSHVPYGTIKGSDFLFSVFAVVGSFVTYHFWYFIQYKLYRF.

11 helical membrane-spanning segments follow: residues 10-29 (IFFS…INFY), 75-93 (IILI…LIIL), 98-117 (LIKI…FTSR), 130-147 (YLFL…NLMV), 157-179 (TNNT…FLHY), 199-221 (IELQ…WYYE), 236-255 (LILK…ICYI), 262-284 (YFAN…IHGT), 289-311 (NILY…ILIL), 323-340 (ALLS…AGAL), and 355-374 (LFSV…WYFI).

It is found in the cell membrane. This is an uncharacterized protein from Rickettsia prowazekii (strain Madrid E).